Reading from the N-terminus, the 182-residue chain is Orotate phosphoribosyltransferase (182 aa).

Residues R91, K92, K95, H97, and E117–S125 contribute to the 5-phospho-alpha-D-ribose 1-diphosphate site. Positions 121 and 149 each coordinate orotate.

The protein belongs to the purine/pyrimidine phosphoribosyltransferase family. PyrE subfamily. As to quaternary structure, homodimer. It depends on Mg(2+) as a cofactor.

It catalyses the reaction orotidine 5'-phosphate + diphosphate = orotate + 5-phospho-alpha-D-ribose 1-diphosphate. The protein operates within pyrimidine metabolism; UMP biosynthesis via de novo pathway; UMP from orotate: step 1/2. In terms of biological role, catalyzes the transfer of a ribosyl phosphate group from 5-phosphoribose 1-diphosphate to orotate, leading to the formation of orotidine monophosphate (OMP). The sequence is that of Orotate phosphoribosyltransferase from Pyrococcus furiosus (strain ATCC 43587 / DSM 3638 / JCM 8422 / Vc1).